The primary structure comprises 72 residues: DNA-directed RNA polymerase subunit Rpo10 (72 aa).

Zn(2+)-binding residues include cysteine 7, cysteine 10, cysteine 53, and cysteine 54.

It belongs to the archaeal Rpo10/eukaryotic RPB10 RNA polymerase subunit family. In terms of assembly, part of the RNA polymerase complex. Zn(2+) is required as a cofactor.

It is found in the cytoplasm. It carries out the reaction RNA(n) + a ribonucleoside 5'-triphosphate = RNA(n+1) + diphosphate. In terms of biological role, DNA-dependent RNA polymerase (RNAP) catalyzes the transcription of DNA into RNA using the four ribonucleoside triphosphates as substrates. This chain is DNA-directed RNA polymerase subunit Rpo10, found in Thermoplasma volcanium (strain ATCC 51530 / DSM 4299 / JCM 9571 / NBRC 15438 / GSS1).